The primary structure comprises 202 residues: uncharacterized protein (202 aa).

Residues Asn-14–Cys-74 enclose the HTH tetR-type domain.

This is an uncharacterized protein from Xanthobacter autotrophicus.